A 278-amino-acid polypeptide reads, in one-letter code: Hydroxyethylthiazole kinase (278 aa).

Met48 serves as a coordination point for substrate. 2 residues coordinate ATP: Arg124 and Thr175. Gly202 lines the substrate pocket.

This sequence belongs to the Thz kinase family. It depends on Mg(2+) as a cofactor.

It catalyses the reaction 5-(2-hydroxyethyl)-4-methylthiazole + ATP = 4-methyl-5-(2-phosphooxyethyl)-thiazole + ADP + H(+). It participates in cofactor biosynthesis; thiamine diphosphate biosynthesis; 4-methyl-5-(2-phosphoethyl)-thiazole from 5-(2-hydroxyethyl)-4-methylthiazole: step 1/1. Catalyzes the phosphorylation of the hydroxyl group of 4-methyl-5-beta-hydroxyethylthiazole (THZ). The sequence is that of Hydroxyethylthiazole kinase from Clostridium botulinum (strain Alaska E43 / Type E3).